Consider the following 157-residue polypeptide: MFDVLIYLFETYMHNEPEMLVDQDKITDDLADAGFYREDINNALNWLEVLADLQEGQKAPYLYTADPQALRIYTVEECRRLGAACRGFILFLEQIQVLQFDAREMVIDRIMALDSPEIDLEDLKWVVLMVLFNIPGYENAYKQMEELLFEVNDGYLH.

It belongs to the Smg family.

The polypeptide is Protein Smg (Yersinia pestis (strain Pestoides F)).